A 449-amino-acid polypeptide reads, in one-letter code: tRNA-2-methylthio-N(6)-dimethylallyladenosine synthase (449 aa).

The MTTase N-terminal domain maps to 13–128 (RRIFIETYGC…LPHLIGTVEK (116 aa)). Residues C22, C58, C92, C166, C170, and C173 each coordinate [4Fe-4S] cluster. Residues 152 to 383 (SRIKISGFIS…ITLQLKISLM (232 aa)) enclose the Radical SAM core domain. The TRAM domain occupies 386-449 (KENIGKTMEI…AATLFGDPKL (64 aa)).

Belongs to the methylthiotransferase family. MiaB subfamily. As to quaternary structure, monomer. [4Fe-4S] cluster is required as a cofactor.

The protein resides in the cytoplasm. It catalyses the reaction N(6)-dimethylallyladenosine(37) in tRNA + (sulfur carrier)-SH + AH2 + 2 S-adenosyl-L-methionine = 2-methylsulfanyl-N(6)-dimethylallyladenosine(37) in tRNA + (sulfur carrier)-H + 5'-deoxyadenosine + L-methionine + A + S-adenosyl-L-homocysteine + 2 H(+). Its function is as follows. Catalyzes the methylthiolation of N6-(dimethylallyl)adenosine (i(6)A), leading to the formation of 2-methylthio-N6-(dimethylallyl)adenosine (ms(2)i(6)A) at position 37 in tRNAs that read codons beginning with uridine. This Azobacteroides pseudotrichonymphae genomovar. CFP2 protein is tRNA-2-methylthio-N(6)-dimethylallyladenosine synthase.